Here is a 529-residue protein sequence, read N- to C-terminus: Peptide chain release factor 3 (529 aa).

Residues 10–278 enclose the tr-type G domain; sequence ARRRTFAIIS…MFVEFAPGPQ (269 aa). Residues 19–26, 87–91, and 141–144 each bind GTP; these read SHPDAGKT, DTPGH, and NKMD.

It belongs to the TRAFAC class translation factor GTPase superfamily. Classic translation factor GTPase family. PrfC subfamily.

It is found in the cytoplasm. Functionally, increases the formation of ribosomal termination complexes and stimulates activities of RF-1 and RF-2. It binds guanine nucleotides and has strong preference for UGA stop codons. It may interact directly with the ribosome. The stimulation of RF-1 and RF-2 is significantly reduced by GTP and GDP, but not by GMP. The sequence is that of Peptide chain release factor 3 from Nitratidesulfovibrio vulgaris (strain DSM 19637 / Miyazaki F) (Desulfovibrio vulgaris).